Consider the following 314-residue polypeptide: Mitochondrial 2-oxoglutarate/malate carrier protein (314 aa).

Ala-2 carries the post-translational modification N-acetylalanine. At Ser-6 the chain carries Phosphoserine. Solcar repeat units follow at residues 23-108, 117-208, and 217-306; these read VKFL…LFER, PGFL…SKQF, and DNIL…MNKA. A helical transmembrane segment spans residues 24-42; it reads KFLFGGLAGMGATVFVQPL. Lys-57 carries the N6-succinyllysine modification. The helical transmembrane segment at 83-101 threads the bilayer; the sequence is GLSAGLLRQATYTTTRLGI. Tyr-102 carries the post-translational modification Phosphotyrosine. The next 3 membrane-spanning stretches (helical) occupy residues 119–140, 183–202, and 222–240; these read FLLK…GTPA, GCIP…LASY, and HFCA…SMPV. Lys-256 is modified (N6-acetyllysine). A helical membrane pass occupies residues 281 to 300; that stretch reads GFTPYYARLGPHTVLTFIFL.

It belongs to the mitochondrial carrier (TC 2.A.29) family. Interacts with SMIM26. Post-translationally, the N-terminus is blocked. In terms of tissue distribution, heart, liver and brain.

It localises to the mitochondrion inner membrane. It carries out the reaction (S)-malate(in) + 2-oxoglutarate(out) = (S)-malate(out) + 2-oxoglutarate(in). It catalyses the reaction malonate(in) + 2-oxoglutarate(out) = malonate(out) + 2-oxoglutarate(in). The enzyme catalyses succinate(in) + 2-oxoglutarate(out) = succinate(out) + 2-oxoglutarate(in). The catalysed reaction is maleate(in) + 2-oxoglutarate(out) = maleate(out) + 2-oxoglutarate(in). It carries out the reaction oxaloacetate(in) + 2-oxoglutarate(out) = oxaloacetate(out) + 2-oxoglutarate(in). Catalyzes the transport of 2-oxoglutarate (alpha-oxoglutarate) across the inner mitochondrial membrane in an electroneutral exchange for malate. Can also exchange 2-oxoglutarate for other dicarboxylic acids such as malonate, succinate, maleate and oxaloacetate, although with lower affinity. Contributes to several metabolic processes, including the malate-aspartate shuttle, the oxoglutarate/isocitrate shuttle, in gluconeogenesis from lactate, and in nitrogen metabolism. Maintains mitochondrial fusion and fission events, and the organization and morphology of cristae. Involved in the regulation of apoptosis. Helps protect from cytotoxic-induced apoptosis by modulating glutathione levels in mitochondria. The polypeptide is Mitochondrial 2-oxoglutarate/malate carrier protein (SLC25A11) (Bos taurus (Bovine)).